A 379-amino-acid chain; its full sequence is Succinyl-diaminopimelate desuccinylase (379 aa).

His-70 serves as a coordination point for Zn(2+). Residue Asp-72 is part of the active site. Residue Asp-103 coordinates Zn(2+). Glu-137 acts as the Proton acceptor in catalysis. Residues Glu-138, Glu-166, and His-352 each coordinate Zn(2+).

Belongs to the peptidase M20A family. DapE subfamily. In terms of assembly, homodimer. It depends on Zn(2+) as a cofactor. Co(2+) is required as a cofactor.

It carries out the reaction N-succinyl-(2S,6S)-2,6-diaminopimelate + H2O = (2S,6S)-2,6-diaminopimelate + succinate. Its pathway is amino-acid biosynthesis; L-lysine biosynthesis via DAP pathway; LL-2,6-diaminopimelate from (S)-tetrahydrodipicolinate (succinylase route): step 3/3. Catalyzes the hydrolysis of N-succinyl-L,L-diaminopimelic acid (SDAP), forming succinate and LL-2,6-diaminopimelate (DAP), an intermediate involved in the bacterial biosynthesis of lysine and meso-diaminopimelic acid, an essential component of bacterial cell walls. The polypeptide is Succinyl-diaminopimelate desuccinylase (Paraburkholderia xenovorans (strain LB400)).